The following is a 259-amino-acid chain: 14-3-3-like protein (259 aa).

The protein belongs to the 14-3-3 family.

The chain is 14-3-3-like protein from Helianthus annuus (Common sunflower).